A 165-amino-acid polypeptide reads, in one-letter code: Nucleotide-binding protein CFF8240_1664 (165 aa).

This sequence belongs to the YajQ family.

Functionally, nucleotide-binding protein. The polypeptide is Nucleotide-binding protein CFF8240_1664 (Campylobacter fetus subsp. fetus (strain 82-40)).